We begin with the raw amino-acid sequence, 432 residues long: FLYWCH-type zinc finger-containing protein peb-1 (432 aa).

The interval 1–33 (MLGLEKPLSSDISSSSTDTSAISPISVSSMPLS) is disordered. Positions 9-26 (SSDISSSSTDTSAISPIS) are enriched in low complexity. The segment at residues 30–188 (MPLSPDKEKK…RNKEGKPRKP (159 aa)) is a DNA-binding region (required for DNA-binding). The FLYWCH-type zinc finger occupies 53-120 (IVTSFKGYQK…NACTKNTHNH (68 aa)). Residues 174-195 (SLVSARNKEGKPRKPKSKTSTN) form a disordered region.

Its subcellular location is the nucleus. Its function is as follows. Putative transcription factor. Binds to specific sequence motif 5'-[TC][AGT]TGCC[GA][AT]-3' in regulatory elements of target genes such as myosin myo-2. May modulate gene expression, perhaps acting in opposition to transcription factor pha-4. Involved in morphogenesis, perhaps especially in formation of the pharynx. Plays roles in molting, feeding and morphology. This chain is FLYWCH-type zinc finger-containing protein peb-1, found in Caenorhabditis briggsae.